Consider the following 156-residue polypeptide: Small ribosomal subunit protein uS7 (156 aa).

The protein belongs to the universal ribosomal protein uS7 family. In terms of assembly, part of the 30S ribosomal subunit. Contacts proteins S9 and S11.

In terms of biological role, one of the primary rRNA binding proteins, it binds directly to 16S rRNA where it nucleates assembly of the head domain of the 30S subunit. Is located at the subunit interface close to the decoding center, probably blocks exit of the E-site tRNA. The sequence is that of Small ribosomal subunit protein uS7 from Alcanivorax borkumensis (strain ATCC 700651 / DSM 11573 / NCIMB 13689 / SK2).